The primary structure comprises 222 residues: Protein GrpE (222 aa).

Positions 1–21 (MSDEKNKFTDASFENCDLKNP) are disordered.

The protein belongs to the GrpE family. Homodimer.

The protein localises to the cytoplasm. Functionally, participates actively in the response to hyperosmotic and heat shock by preventing the aggregation of stress-denatured proteins, in association with DnaK and GrpE. It is the nucleotide exchange factor for DnaK and may function as a thermosensor. Unfolded proteins bind initially to DnaJ; upon interaction with the DnaJ-bound protein, DnaK hydrolyzes its bound ATP, resulting in the formation of a stable complex. GrpE releases ADP from DnaK; ATP binding to DnaK triggers the release of the substrate protein, thus completing the reaction cycle. Several rounds of ATP-dependent interactions between DnaJ, DnaK and GrpE are required for fully efficient folding. The sequence is that of Protein GrpE from Bartonella tribocorum (strain CIP 105476 / IBS 506).